Reading from the N-terminus, the 161-residue chain is Allophycocyanin alpha chain (161 aa).

An N4-methylasparagine modification is found at Asn-71. Position 81 (Cys-81) interacts with (2R,3E)-phycocyanobilin.

The protein belongs to the phycobiliprotein family. Heterodimer of an alpha and a beta chain. Contains one covalently linked phycocyanobilin chromophore.

Its subcellular location is the plastid. It is found in the chloroplast thylakoid membrane. In terms of biological role, light-harvesting photosynthetic bile pigment-protein from the phycobiliprotein complex. Allophycocyanin has a maximum absorption at approximately 650 nanometers. In Cyanidium caldarium (Red alga), this protein is Allophycocyanin alpha chain (apcA).